The following is a 172-amino-acid chain: DCC family protein At1g52590, chloroplastic (172 aa).

A chloroplast-targeting transit peptide spans 1 to 25 (MAILIPASFGRLTITSRAQVRVRVS).

The protein belongs to the DCC thiol-disulfide oxidoreductase family.

The protein localises to the plastid. It localises to the chloroplast. This chain is DCC family protein At1g52590, chloroplastic, found in Arabidopsis thaliana (Mouse-ear cress).